The sequence spans 313 residues: Putative S-adenosyl-L-methionine-dependent methyltransferase MAV_4573 (313 aa).

Residues Asp129 and 158–159 each bind S-adenosyl-L-methionine; that span reads DL.

This sequence belongs to the UPF0677 family.

Exhibits S-adenosyl-L-methionine-dependent methyltransferase activity. The protein is Putative S-adenosyl-L-methionine-dependent methyltransferase MAV_4573 of Mycobacterium avium (strain 104).